Reading from the N-terminus, the 416-residue chain is Putative serine protease HhoB (416 aa).

The first 25 residues, 1-25 (MAIHLKASHLGVAVLLLLFGGAIGA), serve as a signal peptide directing secretion. Positions 35 to 53 (GQNHSSPDSPVNTSPQSLT) are enriched in polar residues. Residues 35-57 (GQNHSSPDSPVNTSPQSLTPAPV) are disordered. Residues 320–398 (EMTKQLRTSG…PLAIAVKRGQ (79 aa)) enclose the PDZ domain.

Belongs to the peptidase S1C family.

In terms of biological role, a putative protease, its function overlaps that of the related putative proteases HtrA and HhoA. The chain is Putative serine protease HhoB (hhoB) from Synechocystis sp. (strain ATCC 27184 / PCC 6803 / Kazusa).